The primary structure comprises 205 residues: Small ribosomal subunit protein uS4c (205 aa).

Residues 93-156 (MRLDNTVFRL…KSRNLVLNNL (64 aa)) enclose the S4 RNA-binding domain.

The protein belongs to the universal ribosomal protein uS4 family. In terms of assembly, part of the 30S ribosomal subunit. Contacts protein S5. The interaction surface between S4 and S5 is involved in control of translational fidelity.

It localises to the plastid. The protein resides in the chloroplast. Functionally, one of the primary rRNA binding proteins, it binds directly to 16S rRNA where it nucleates assembly of the body of the 30S subunit. Its function is as follows. With S5 and S12 plays an important role in translational accuracy. The protein is Small ribosomal subunit protein uS4c (rps4) of Mesostigma viride (Green alga).